We begin with the raw amino-acid sequence, 99 residues long: uncharacterized protein (99 aa).

It belongs to the ycf15 family.

It is found in the plastid. The protein localises to the chloroplast. This is an uncharacterized protein from Saccharum hybrid (Sugarcane).